The chain runs to 349 residues: Ion-translocating oxidoreductase complex subunit D (349 aa).

The next 3 membrane-spanning stretches (helical) occupy residues 20–42 (VMQR…FGWG), 77–99 (SAML…WMIV), and 124–144 (AMAA…TWIA). Thr-185 is subject to FMN phosphoryl threonine. 5 consecutive transmembrane segments (helical) span residues 212–232 (STGV…LVLL), 239–259 (WHIS…GFLL), 265–285 (ASPL…FIAT), 291–311 (ATSS…VYII), and 315–335 (GGYP…APFI).

This sequence belongs to the NqrB/RnfD family. In terms of assembly, the complex is composed of six subunits: RnfA, RnfB, RnfC, RnfD, RnfE and RnfG. FMN serves as cofactor.

It localises to the cell inner membrane. Its function is as follows. Part of a membrane-bound complex that couples electron transfer with translocation of ions across the membrane. This is Ion-translocating oxidoreductase complex subunit D from Shewanella baltica (strain OS223).